A 109-amino-acid chain; its full sequence is MSKSTIKFVRLSPTKTRLIAKEIQGMNAEFALATLEFTPNRGAKYIANAILSAVANGGFEPNEVIVKSCRVDAGPVLKRFRPRARGTASRIRKPTSHIMVEVSKPSKEA.

The segment covering 84–95 has biased composition (basic residues); it reads ARGTASRIRKPT. Residues 84 to 109 form a disordered region; the sequence is ARGTASRIRKPTSHIMVEVSKPSKEA.

This sequence belongs to the universal ribosomal protein uL22 family. In terms of assembly, part of the 50S ribosomal subunit.

Its function is as follows. This protein binds specifically to 23S rRNA; its binding is stimulated by other ribosomal proteins, e.g. L4, L17, and L20. It is important during the early stages of 50S assembly. It makes multiple contacts with different domains of the 23S rRNA in the assembled 50S subunit and ribosome. Functionally, the globular domain of the protein is located near the polypeptide exit tunnel on the outside of the subunit, while an extended beta-hairpin is found that lines the wall of the exit tunnel in the center of the 70S ribosome. The protein is Large ribosomal subunit protein uL22 of Campylobacter hominis (strain ATCC BAA-381 / DSM 21671 / CCUG 45161 / LMG 19568 / NCTC 13146 / CH001A).